The following is a 508-amino-acid chain: Cytochrome c-552 (508 aa).

The N-terminal stretch at 1–23 is a signal peptide; that stretch reads MNKSYKILLTGSVIAIGAMGLMA. His103 serves as a coordination point for heme c. Residues Cys131, Cys134, and Lys135 each contribute to the heme site. Positions 169, 172, 173, 211, 214, and 215 each coordinate heme c. Residues Glu217, Tyr218, Lys274, and Gln276 each coordinate Ca(2+). Tyr218 is a substrate binding site. Residue His277 participates in substrate binding. Residues His288, Cys295, Cys298, His299, His313, Cys326, Cys329, His330, and His405 each contribute to the heme c site. The tract at residues 485–508 is disordered; it reads GRLDPKTLEGMSNKSSWSQTELSQ. Positions 494 to 508 are enriched in polar residues; it reads GMSNKSSWSQTELSQ.

This sequence belongs to the cytochrome c-552 family. Ca(2+) serves as cofactor. Heme c is required as a cofactor.

It localises to the periplasm. The enzyme catalyses 6 Fe(III)-[cytochrome c] + NH4(+) + 2 H2O = 6 Fe(II)-[cytochrome c] + nitrite + 8 H(+). The protein operates within nitrogen metabolism; nitrate reduction (assimilation). Functionally, catalyzes the reduction of nitrite to ammonia, consuming six electrons in the process. This is Cytochrome c-552 from Desulfotalea psychrophila (strain LSv54 / DSM 12343).